A 113-amino-acid polypeptide reads, in one-letter code: Single-stranded DNA-binding protein B (113 aa).

The SSB domain maps to 1 to 104 (MFNQVMLVGR…VLADTVRFMD (104 aa)). Phosphotyrosine is present on Y82.

Homotetramer. Post-translationally, phosphorylated by YwqD, which increases ssDNA affinity; dephosphorylated by YwqE.

The protein resides in the cytoplasm. Not essential for replication of the chromosome, but is required for optimal competence. Binds ssDNA, binding is facilitated by DprA, acts as an accessory factor for homologous DNA strand exchange. The polypeptide is Single-stranded DNA-binding protein B (ssbB) (Bacillus subtilis (strain 168)).